Reading from the N-terminus, the 230-residue chain is Orotidine 5'-phosphate decarboxylase (230 aa).

Residues Asp11, Lys34, 61–70 (DLKLHDIPNT), Thr117, Arg179, Gln188, Gly208, and Arg209 each bind substrate. The Proton donor role is filled by Lys63.

Belongs to the OMP decarboxylase family. Type 1 subfamily. As to quaternary structure, homodimer.

It catalyses the reaction orotidine 5'-phosphate + H(+) = UMP + CO2. It functions in the pathway pyrimidine metabolism; UMP biosynthesis via de novo pathway; UMP from orotate: step 2/2. Its function is as follows. Catalyzes the decarboxylation of orotidine 5'-monophosphate (OMP) to uridine 5'-monophosphate (UMP). This chain is Orotidine 5'-phosphate decarboxylase, found in Streptococcus mutans serotype c (strain ATCC 700610 / UA159).